Reading from the N-terminus, the 309-residue chain is 1,2-phenylacetyl-CoA epoxidase, subunit A (309 aa).

Residues Arg-33, Gln-37, 103–106 (KYSS), Asn-132, Met-193, 202–204 (SPN), Lys-214, and Asn-218 contribute to the substrate site.

Forms a stable heterotetramer (dimer of heterodimers) with PaaC. Fe cation serves as cofactor.

It catalyses the reaction phenylacetyl-CoA + NADPH + O2 + H(+) = 2-(1,2-epoxy-1,2-dihydrophenyl)acetyl-CoA + NADP(+) + H2O. The protein operates within aromatic compound metabolism; phenylacetate degradation. Component of 1,2-phenylacetyl-CoA epoxidase multicomponent enzyme system which catalyzes the reduction of phenylacetyl-CoA (PA-CoA) to form 1,2-epoxyphenylacetyl-CoA. The subunit A is the catalytic subunit involved in the incorporation of one atom of molecular oxygen into phenylacetyl-CoA. The polypeptide is 1,2-phenylacetyl-CoA epoxidase, subunit A (paaA) (Escherichia coli (strain K12)).